The sequence spans 201 residues: Small ribosomal subunit protein uS4 (201 aa).

Residues 103–167 (RRLQTIVTKK…SKIPQVLEKT (65 aa)) form the S4 RNA-binding domain. Residues 163–201 (VLEKTKSEAPAEETVEAPAEETVEAPAEEKKEESPSTES) are disordered. Positions 172–185 (PAEETVEAPAEETV) are enriched in acidic residues. The segment covering 189 to 201 (AEEKKEESPSTES) has biased composition (basic and acidic residues).

This sequence belongs to the universal ribosomal protein uS4 family. Part of the 30S ribosomal subunit. Contacts protein S5. The interaction surface between S4 and S5 is involved in control of translational fidelity.

In terms of biological role, one of the primary rRNA binding proteins, it binds directly to 16S rRNA where it nucleates assembly of the body of the 30S subunit. Its function is as follows. With S5 and S12 plays an important role in translational accuracy. The sequence is that of Small ribosomal subunit protein uS4 from Nitrosopumilus maritimus (strain SCM1).